Reading from the N-terminus, the 302-residue chain is MPKKQLPPKEERHKLFGSVPPKERTKPIEKNKMADLQNTKRDFLFKLDAVGISNVKYPVIIHSDLAPKEQTSIGTFEFSSSIPTMSKGTNMSRFMELLQEYSSSGMNVSISELKRFTKELSGKLEQKDATIEVSFPWFFERKGPESQSAGMNHADAKLSVTYDSNSGFSIDVSLSAWITTLCPCSKEISEYSAHNQRGNVTLEATLVEDFDEAKIDWKLALLEAAESNASARLHPVLKRTDEKMVTEQAYENPRFVEDMVRLIAADLYEMPFVSKFHVSCRNEESIHMHDAIASITYDKSSE.

Residues 1 to 27 are disordered; that stretch reads MPKKQLPPKEERHKLFGSVPPKERTKP.

The protein belongs to the GTP cyclohydrolase IV family.

The catalysed reaction is GTP + H2O = 7,8-dihydroneopterin 3'-triphosphate + formate + H(+). It participates in cofactor biosynthesis; 7,8-dihydroneopterin triphosphate biosynthesis; 7,8-dihydroneopterin triphosphate from GTP: step 1/1. In terms of biological role, converts GTP to 7,8-dihydroneopterin triphosphate. The sequence is that of GTP cyclohydrolase FolE2 from Oceanobacillus iheyensis (strain DSM 14371 / CIP 107618 / JCM 11309 / KCTC 3954 / HTE831).